The primary structure comprises 372 residues: Maltose/maltodextrin import ATP-binding protein MalK (372 aa).

One can recognise an ABC transporter domain in the interval 4 to 234 (VSLRNVGKSY…PANRFVAGFI (231 aa)). 36–43 (GPSGCGKS) lines the ATP pocket.

This sequence belongs to the ABC transporter superfamily. Maltooligosaccharide importer (TC 3.A.1.1.1) family. In terms of assembly, the complex is composed of two ATP-binding proteins (MalK), two transmembrane proteins (MalG and MalK) and a solute-binding protein (MalE).

The protein localises to the cell inner membrane. It catalyses the reaction D-maltose(out) + ATP + H2O = D-maltose(in) + ADP + phosphate + H(+). In terms of biological role, part of the ABC transporter complex MalEFGK involved in maltose/maltodextrin import. Responsible for energy coupling to the transport system. The protein is Maltose/maltodextrin import ATP-binding protein MalK of Mannheimia succiniciproducens (strain KCTC 0769BP / MBEL55E).